Consider the following 227-residue polypeptide: Peroxisomal membrane protein 11B (227 aa).

Residues 1–85 (MSLDTVDKLV…RNPGATPMIR (85 aa)) lie on the Cytoplasmic side of the membrane. A helical transmembrane segment spans residues 86 to 106 (FLAVLANSGEMVYFFFDHFLW). Residues 107–201 (LSRIGSIDAK…IALAEIHPNP (95 aa)) lie on the Lumenal side of the membrane. A helical membrane pass occupies residues 202-222 (FCNHTITLGISGLVSAWAGWY). Residues 223–227 (RNWPS) lie on the Cytoplasmic side of the membrane.

Belongs to the peroxin-11 family. In terms of assembly, homooligomer. Interacts with ARC5 and FIS1B on peroxisomes. Expressed in roots, leaves and developing siliques.

The protein resides in the peroxisome membrane. Involved in peroxisomal proliferation. Promotes peroxisomal duplication, aggregation or elongation without fission. This Arabidopsis thaliana (Mouse-ear cress) protein is Peroxisomal membrane protein 11B (PEX11B).